The following is a 165-amino-acid chain: K(+)/H(+) antiporter subunit KhtT (165 aa).

Positions 76–161 (LESIEMAFSD…LKKLIHDFLS (86 aa)) constitute an RCK C-terminal domain.

As to quaternary structure, the transporter is composed of the integral membrane protein KhtU and the regulatory protein KhtT.

The protein resides in the cell membrane. Its activity is regulated as follows. Binds cyclic di-AMP (c-di-AMP), which may regulate the activity. In terms of biological role, required for activity of the potassium/proton antiporter KhtU. Involved in protection of the cell from methylglyoxal, a toxic by-product of glycolysis. The sequence is that of K(+)/H(+) antiporter subunit KhtT from Bacillus subtilis (strain 168).